Consider the following 281-residue polypeptide: Acetylglutamate kinase (281 aa).

Residues 64–65, arginine 86, and asparagine 179 contribute to the substrate site; that span reads GG.

This sequence belongs to the acetylglutamate kinase family. ArgB subfamily.

The protein resides in the cytoplasm. It catalyses the reaction N-acetyl-L-glutamate + ATP = N-acetyl-L-glutamyl 5-phosphate + ADP. It participates in amino-acid biosynthesis; L-arginine biosynthesis; N(2)-acetyl-L-ornithine from L-glutamate: step 2/4. In terms of biological role, catalyzes the ATP-dependent phosphorylation of N-acetyl-L-glutamate. The chain is Acetylglutamate kinase from Campylobacter curvus (strain 525.92).